The sequence spans 236 residues: Putative (5-formylfuran-3-yl)methyl phosphate synthase (236 aa).

Lys-38 acts as the Schiff-base intermediate with substrate in catalysis. The active-site Proton acceptor is Lys-94.

It belongs to the MfnB family.

The catalysed reaction is 2 D-glyceraldehyde 3-phosphate = 4-(hydroxymethyl)-2-furancarboxaldehyde phosphate + phosphate + 2 H2O. Functionally, catalyzes the formation of 4-(hydroxymethyl)-2-furancarboxaldehyde phosphate (4-HFC-P) from two molecules of glyceraldehyde-3-P (GA-3-P). This is Putative (5-formylfuran-3-yl)methyl phosphate synthase from Methylorubrum extorquens (Methylobacterium dichloromethanicum).